A 311-amino-acid chain; its full sequence is Aspartate carbamoyltransferase catalytic subunit (311 aa).

2 residues coordinate carbamoyl phosphate: arginine 55 and threonine 56. Lysine 85 serves as a coordination point for L-aspartate. Carbamoyl phosphate is bound by residues arginine 106, histidine 135, and glutamine 138. L-aspartate-binding residues include arginine 168 and arginine 230. Leucine 268 and proline 269 together coordinate carbamoyl phosphate.

This sequence belongs to the aspartate/ornithine carbamoyltransferase superfamily. ATCase family. Heterododecamer (2C3:3R2) of six catalytic PyrB chains organized as two trimers (C3), and six regulatory PyrI chains organized as three dimers (R2).

It carries out the reaction carbamoyl phosphate + L-aspartate = N-carbamoyl-L-aspartate + phosphate + H(+). Its pathway is pyrimidine metabolism; UMP biosynthesis via de novo pathway; (S)-dihydroorotate from bicarbonate: step 2/3. In terms of biological role, catalyzes the condensation of carbamoyl phosphate and aspartate to form carbamoyl aspartate and inorganic phosphate, the committed step in the de novo pyrimidine nucleotide biosynthesis pathway. This chain is Aspartate carbamoyltransferase catalytic subunit, found in Yersinia pseudotuberculosis serotype IB (strain PB1/+).